We begin with the raw amino-acid sequence, 255 residues long: 14-3-3-like protein GF14 psi (255 aa).

Ser-66 carries the post-translational modification Phosphoserine. Phosphothreonine is present on Thr-162. Ser-189 carries the post-translational modification Phosphoserine. Residues Thr-210 and Thr-238 each carry the phosphothreonine modification.

It belongs to the 14-3-3 family. As to quaternary structure, component of a DNA binding complex that binds to the G box. Interacts with IDH3, AGT3, GLN1-1, GLN1-2, GLN1-4, SAM1, SAM2, MDH1, METK3 and MDH2. Binds to 1-aminocyclopropane-1-carboxylate synthases (ACS) such as ACS2, ACS5, ACS6, ACS8, and ACS11. Interacts with FD. Interacts with DREB1A and DREB1B in the nucleus. Interacts with CINV1.

Its subcellular location is the cytoplasm. It is found in the nucleus. In terms of biological role, is associated with a DNA binding complex that binds to the G box, a well-characterized cis-acting DNA regulatory element found in plant genes. Involved in the regulation of nutrient metabolism. Reciprocal negative transcription regulation of miR396. Negative regulator of constitutive freezing tolerance and cold acclimation by controlling cold-induced gene expression partially through an ethylene (ET)-dependent pathway; prevents ethylene (ET) biosynthesis, probably by binding 1-aminocyclopropane-1-carboxylate synthases (ACS) to reduce their stability, thus contributing to establish adequate ET levels under both standard and low-temperature conditions. The sequence is that of 14-3-3-like protein GF14 psi from Arabidopsis thaliana (Mouse-ear cress).